The sequence spans 546 residues: CTP synthase (546 aa).

The segment at 1–266 (MTTNYIFVTG…DELVCKRFGI (266 aa)) is amidoligase domain. Residue Ser-14 coordinates CTP. Residue Ser-14 participates in UTP binding. Residues 15 to 20 (SLGKGI) and Asp-72 contribute to the ATP site. 2 residues coordinate Mg(2+): Asp-72 and Glu-140. CTP is bound by residues 147–149 (DIE), 187–192 (KTKPTQ), and Lys-223. Residues 187–192 (KTKPTQ) and Lys-223 each bind UTP. 239-241 (RDV) lines the ATP pocket. Residues 291–542 (TIGMVGKYIE…VKAAGEFQRG (252 aa)) form the Glutamine amidotransferase type-1 domain. Gly-352 lines the L-glutamine pocket. The active-site Nucleophile; for glutamine hydrolysis is Cys-379. Residues 380 to 383 (LGMQ), Glu-403, and Arg-470 contribute to the L-glutamine site. Catalysis depends on residues His-515 and Glu-517.

It belongs to the CTP synthase family. In terms of assembly, homotetramer.

The enzyme catalyses UTP + L-glutamine + ATP + H2O = CTP + L-glutamate + ADP + phosphate + 2 H(+). It carries out the reaction L-glutamine + H2O = L-glutamate + NH4(+). It catalyses the reaction UTP + NH4(+) + ATP = CTP + ADP + phosphate + 2 H(+). It functions in the pathway pyrimidine metabolism; CTP biosynthesis via de novo pathway; CTP from UDP: step 2/2. Its activity is regulated as follows. Allosterically activated by GTP, when glutamine is the substrate; GTP has no effect on the reaction when ammonia is the substrate. The allosteric effector GTP functions by stabilizing the protein conformation that binds the tetrahedral intermediate(s) formed during glutamine hydrolysis. Inhibited by the product CTP, via allosteric rather than competitive inhibition. In terms of biological role, catalyzes the ATP-dependent amination of UTP to CTP with either L-glutamine or ammonia as the source of nitrogen. Regulates intracellular CTP levels through interactions with the four ribonucleotide triphosphates. The polypeptide is CTP synthase (Vibrio atlanticus (strain LGP32) (Vibrio splendidus (strain Mel32))).